A 199-amino-acid polypeptide reads, in one-letter code: Charged multivesicular body protein 1b (199 aa).

Coiled coils occupy residues 15 to 42 and 178 to 199; these read AKEL…AIQK and TSVA…RDQV. Positions 167-199 are disordered; it reads ELPQGQTGSVGTSVASTEQDELSQRLARLRDQV. The span at 170–183 shows a compositional bias: polar residues; it reads QGQTGSVGTSVAST. The MIT-interacting motif signature appears at 186–196; that stretch reads DELSQRLARLR.

This sequence belongs to the SNF7 family.

It is found in the cytoplasm. The protein localises to the cytosol. Its subcellular location is the endosome. It localises to the late endosome membrane. Probable peripherally associated component of the endosomal sorting required for transport complex III (ESCRT-III) which is involved in multivesicular bodies (MVBs) formation and sorting of endosomal cargo proteins into MVBs. MVBs contain intraluminal vesicles (ILVs) that are generated by invagination and scission from the limiting membrane of the endosome and mostly are delivered to lysosomes enabling degradation of membrane proteins, such as stimulated growth factor receptors, lysosomal enzymes and lipids. This Xenopus tropicalis (Western clawed frog) protein is Charged multivesicular body protein 1b (chmp1b).